A 210-amino-acid chain; its full sequence is Protein-methionine-sulfoxide reductase heme-binding subunit MsrQ (210 aa).

A run of 4 helical transmembrane segments spans residues 15 to 35, 89 to 109, 122 to 142, and 160 to 180; these read DTLV…WLAW, LFAF…DLFF, PFIT…VTST, and LVYL…KADH.

Belongs to the MsrQ family. In terms of assembly, heterodimer of a catalytic subunit (MsrP) and a heme-binding subunit (MsrQ). FMN serves as cofactor. Heme b is required as a cofactor.

The protein resides in the cell inner membrane. Part of the MsrPQ system that repairs oxidized periplasmic proteins containing methionine sulfoxide residues (Met-O), using respiratory chain electrons. Thus protects these proteins from oxidative-stress damage caused by reactive species of oxygen and chlorine generated by the host defense mechanisms. MsrPQ is essential for the maintenance of envelope integrity under bleach stress, rescuing a wide series of structurally unrelated periplasmic proteins from methionine oxidation. MsrQ provides electrons for reduction to the reductase catalytic subunit MsrP, using the quinone pool of the respiratory chain. The polypeptide is Protein-methionine-sulfoxide reductase heme-binding subunit MsrQ (Caulobacter vibrioides (strain ATCC 19089 / CIP 103742 / CB 15) (Caulobacter crescentus)).